The sequence spans 286 residues: Quinone oxidoreductase 2 (286 aa).

Residues 6-11 (GATGQL), Arg-33, 73-75 (SSS), 138-143 (GWYSEN), and Arg-171 contribute to the NADP(+) site.

This sequence belongs to the NmrA-type oxidoreductase family. In terms of assembly, monomer.

It carries out the reaction a quinone + NADH + H(+) = a quinol + NAD(+). The enzyme catalyses a quinone + NADPH + H(+) = a quinol + NADP(+). Its function is as follows. Quinone oxidoreductase that may play some additional role beyond quinone reduction. Potential redox sensor protein. Overexpression induces retardation of growth. The chain is Quinone oxidoreductase 2 (qorB) from Escherichia coli (strain K12).